The sequence spans 1170 residues: Anion exchange protein 3 (1170 aa).

Over 1-656 (MGRSYNEKDF…DLKDALDTQC (656 aa)) the chain is Cytoplasmic. Disordered regions lie at residues 17–96 (FHHT…PQLS), 112–167 (FHME…TTRG), and 239–267 (HLVKKSSRCQLPRSSNGSPPLSSLKRRKR). Basic residues predominate over residues 32 to 53 (RFRKRVLSMDRRRKRKRKKKKT). Over residues 67–76 (VDEEEAESEI) the composition is skewed to acidic residues. Residues 246–259 (RCQLPRSSNGSPPL) are compositionally biased toward polar residues. The next 5 helical transmembrane spans lie at 657 to 677 (IAAVIFIYFAALSPTITFGGL), 702 to 722 (FSLLAGQPLLIIGFSGPLLVF), 744 to 764 (IGFWLIFIVLVIVAAEGSFLV), 774 to 794 (IFAFLISLIFIYETFSKLIKV), and 828 to 848 (PNTALLSMVLMMGTFFTAFFL). The tract at residues 657 to 1170 (IAAVIFIYFA…DEYNEIHMLV (514 aa)) is membrane (anion exchange). The Cytoplasmic segment spans residues 849-863 (RKLRNSRFLGGKVRR). A run of 5 helical transmembrane segments spans residues 864 to 884 (VIGDFGIPISILISVLVDILI), 919 to 939 (FPVWMMGASVIPALLVFILIF), 966 to 986 (LLLIVTLGAICPLFGLPWLTA), 1020 to 1063 (RVTG…LTGI), and 1104 to 1124 (IVLLWVVKSTVASLAFPFILI).

It belongs to the anion exchanger (TC 2.A.31) family. In terms of tissue distribution, widely expressed at low levels.

It localises to the cell membrane. The catalysed reaction is hydrogencarbonate(in) + chloride(out) = hydrogencarbonate(out) + chloride(in). In terms of biological role, sodium-independent anion exchanger which mediates the electroneutral exchange of chloride for bicarbonate ions across the cell membrane. May be involved in the regulation of intracellular pH, and the modulation of cardiac action potential. This chain is Anion exchange protein 3, found in Danio rerio (Zebrafish).